The primary structure comprises 817 residues: Lon protease (817 aa).

The Lon N-terminal domain maps to 44 to 239 (LPILPLRNTV…ETLRYMNVEL (196 aa)). 390–397 (GPPGVGKT) is an ATP binding site. One can recognise a Lon proteolytic domain in the interval 626–807 (NDVAGVVTGL…SEVLAIALTD (182 aa)). Residues serine 713 and lysine 756 contribute to the active site.

The protein belongs to the peptidase S16 family. Homohexamer. Organized in a ring with a central cavity.

It localises to the cytoplasm. It catalyses the reaction Hydrolysis of proteins in presence of ATP.. Functionally, ATP-dependent serine protease that mediates the selective degradation of mutant and abnormal proteins as well as certain short-lived regulatory proteins. Required for cellular homeostasis and for survival from DNA damage and developmental changes induced by stress. Degrades polypeptides processively to yield small peptide fragments that are 5 to 10 amino acids long. Binds to DNA in a double-stranded, site-specific manner. This chain is Lon protease, found in Flavobacterium johnsoniae (strain ATCC 17061 / DSM 2064 / JCM 8514 / BCRC 14874 / CCUG 350202 / NBRC 14942 / NCIMB 11054 / UW101) (Cytophaga johnsonae).